We begin with the raw amino-acid sequence, 139 residues long: Small ribosomal subunit protein uS11A (139 aa).

Residues 119-139 (DVTPIPTDSTRRKGGRRGRRL) are disordered. Basic residues predominate over residues 130 to 139 (RKGGRRGRRL).

This sequence belongs to the universal ribosomal protein uS11 family. As to quaternary structure, component of the small ribosomal subunit (SSU). Mature yeast ribosomes consist of a small (40S) and a large (60S) subunit. The 40S small subunit contains 1 molecule of ribosomal RNA (18S rRNA) and at least 33 different proteins. The large 60S subunit contains 3 rRNA molecules (25S, 5.8S and 5S rRNA) and at least 46 different proteins. uS11 interacts with eS1 forming part of the mRNA exit tunnel. uS11 interacts with snoRNA U3. uS11 interacts with MPP10. Component of the ribosomal small subunit (SSU) processome composed of at least 40 protein subunits and snoRNA U3.

Its subcellular location is the cytoplasm. The protein localises to the nucleus. It localises to the nucleolus. Its function is as follows. Component of the ribosome, a large ribonucleoprotein complex responsible for the synthesis of proteins in the cell. The small ribosomal subunit (SSU) binds messenger RNAs (mRNAs) and translates the encoded message by selecting cognate aminoacyl-transfer RNA (tRNA) molecules. The large subunit (LSU) contains the ribosomal catalytic site termed the peptidyl transferase center (PTC), which catalyzes the formation of peptide bonds, thereby polymerizing the amino acids delivered by tRNAs into a polypeptide chain. The nascent polypeptides leave the ribosome through a tunnel in the LSU and interact with protein factors that function in enzymatic processing, targeting, and the membrane insertion of nascent chains at the exit of the ribosomal tunnel. uS11 is involved in nucleolar processing of pre-18S ribosomal RNA and ribosome assembly. The chain is Small ribosomal subunit protein uS11A (rps1401) from Schizosaccharomyces pombe (strain 972 / ATCC 24843) (Fission yeast).